The sequence spans 487 residues: Glycogen synthase 1 (487 aa).

An ADP-alpha-D-glucose-binding site is contributed by lysine 15.

It belongs to the glycosyltransferase 1 family. Bacterial/plant glycogen synthase subfamily.

It carries out the reaction [(1-&gt;4)-alpha-D-glucosyl](n) + ADP-alpha-D-glucose = [(1-&gt;4)-alpha-D-glucosyl](n+1) + ADP + H(+). It functions in the pathway glycan biosynthesis; glycogen biosynthesis. In terms of biological role, synthesizes alpha-1,4-glucan chains using ADP-glucose. The polypeptide is Glycogen synthase 1 (Nitrosococcus oceani (strain ATCC 19707 / BCRC 17464 / JCM 30415 / NCIMB 11848 / C-107)).